A 244-amino-acid polypeptide reads, in one-letter code: MTRVAVVAGGGEHTGPAVALRLAAGGFDVALLGSEFTSADKTVRRVEEYGRQCVTVRAELSDARSVAVAFGRVRTALSGPAVLVTCVGPQPLPDGLPEDESADEQRYTAVRRALRPVFVCCQAGAGQLLRHRWGRIIIVTEPADADGNTWRTSRPVLDGLIGFTRSAALELARSGTTVNLVAPADRAADSRAPAHRAAGDDSAGSYADGVAHVTEFLVDERAVGITGQAIRVAARADVPLLRER.

Residues 9-12 (GGGE), 59-60 (EL), and 154-158 (RPVLD) contribute to the NADP(+) site.

It belongs to the short-chain dehydrogenases/reductases (SDR) family. As to quaternary structure, heterotetramer; the NovJ(2)K(2) heterotetramer is composed of subunits of 2 NovJ and 2 subunits of NovK.

Its pathway is antibiotic biosynthesis; novobiocin biosynthesis. In terms of biological role, non-catalytic subunit of the NovJ(2)K(2) heterotetramer that catalyzes the NADPH-dependent reduction of the tyrosyl moiety of L-beta-OH-Tyr-S-NovH intermediate to yield the tethered beta-ketotyrosyl-S-NovH in the novobiocin biosynthesis pathway. Novobiocin is an aminocoumarin family antibiotic that targets bacterial DNA gyrases. This Streptomyces niveus (Streptomyces spheroides) protein is Short-chain dehydrogenase/reductase family member NovK (novK).